The chain runs to 156 residues: Small ribosomal subunit protein uS7 (156 aa).

The protein belongs to the universal ribosomal protein uS7 family. Part of the 30S ribosomal subunit. Contacts proteins S9 and S11.

In terms of biological role, one of the primary rRNA binding proteins, it binds directly to 16S rRNA where it nucleates assembly of the head domain of the 30S subunit. Is located at the subunit interface close to the decoding center, probably blocks exit of the E-site tRNA. This is Small ribosomal subunit protein uS7 from Syntrophus aciditrophicus (strain SB).